The chain runs to 593 residues: Thiol:disulfide interchange protein DsbD (593 aa).

Positions 1-21 (MRALLTFFVAGLLVLSSPAMA) are cleaved as a signal peptide. 2 cysteine pairs are disulfide-bonded: C130–C136 and C207–C328. 8 helical membrane passes run 193–215 (LLFL…YPIL), 235–257 (LVYV…SAGL), 269–291 (LIGL…TLQL), 318–340 (GAIS…LLYV), 347–369 (LTGG…LVAV), 384–401 (RVKT…IFLL), 408–425 (MWST…FGWL), and 440–462 (SAVG…NYWF). Positions 451–593 (FASAQPALNY…FLEHIQRISN (143 aa)) constitute a Thioredoxin domain. A disulfide bond links C508 and C511.

The protein belongs to the thioredoxin family. DsbD subfamily.

The protein resides in the cell inner membrane. It carries out the reaction [protein]-dithiol + NAD(+) = [protein]-disulfide + NADH + H(+). The enzyme catalyses [protein]-dithiol + NADP(+) = [protein]-disulfide + NADPH + H(+). In terms of biological role, required to facilitate the formation of correct disulfide bonds in some periplasmic proteins and for the assembly of the periplasmic c-type cytochromes. Acts by transferring electrons from cytoplasmic thioredoxin to the periplasm. This transfer involves a cascade of disulfide bond formation and reduction steps. In Vibrio vulnificus (strain CMCP6), this protein is Thiol:disulfide interchange protein DsbD.